The chain runs to 432 residues: Glutamyl-tRNA reductase (432 aa).

Substrate-binding positions include 49–52, Ser-107, 112–114, and Gln-118; these read TCNR and ETQ. Cys-50 (nucleophile) is an active-site residue. 186 to 191 provides a ligand contact to NADP(+); sequence GAGEMG.

It belongs to the glutamyl-tRNA reductase family. Homodimer.

The enzyme catalyses (S)-4-amino-5-oxopentanoate + tRNA(Glu) + NADP(+) = L-glutamyl-tRNA(Glu) + NADPH + H(+). Its pathway is porphyrin-containing compound metabolism; protoporphyrin-IX biosynthesis; 5-aminolevulinate from L-glutamyl-tRNA(Glu): step 1/2. Functionally, catalyzes the NADPH-dependent reduction of glutamyl-tRNA(Glu) to glutamate 1-semialdehyde (GSA). The protein is Glutamyl-tRNA reductase of Campylobacter jejuni (strain RM1221).